The following is a 354-amino-acid chain: NADH-ubiquinone oxidoreductase chain 1 (354 aa).

Helical transmembrane passes span 43–63 (LFWS…LTLF), 108–128 (PALF…LWGC), 139–159 (FFWG…GVVL), 180–200 (VISY…VVGS), 211–231 (VSGC…FCVL), 264–284 (IFIA…VLFL), 298–318 (LISS…LIVL), and 334–354 (LIWC…LMII).

It belongs to the complex I subunit 1 family.

It is found in the mitochondrion inner membrane. The enzyme catalyses a ubiquinone + NADH + 5 H(+)(in) = a ubiquinol + NAD(+) + 4 H(+)(out). Core subunit of the mitochondrial membrane respiratory chain NADH dehydrogenase (Complex I) that is believed to belong to the minimal assembly required for catalysis. Complex I functions in the transfer of electrons from NADH to the respiratory chain. The immediate electron acceptor for the enzyme is believed to be ubiquinone. This Pecten maximus (King scallop) protein is NADH-ubiquinone oxidoreductase chain 1 (ND1).